Consider the following 244-residue polypeptide: MINGLIGKKIGMTQLFDSKGDVRPVTVLQAGPCVITQRKTANKDGYDAAQVGLVEFVKETRLTKAQLGHLGKNDLPPVRTLHEFAIVADGPSEAESNGEVKVGDKVLVDLFEGSKFVDVTGVSKGRGFAGVVKRHKFAGGARSHGSMFQISGSIGSSAFPSRVFKGMRMAGHMGQDQVTVRNLRILGIDKDENLLVVEGAVPGPKDATVFITMSKKPPRERRGFAGSSTVDPLKASKRAVAKKK.

The disordered stretch occupies residues 215-244 (KKPPRERRGFAGSSTVDPLKASKRAVAKKK). Basic residues predominate over residues 235–244 (ASKRAVAKKK).

The protein belongs to the universal ribosomal protein uL3 family. As to quaternary structure, part of the 50S ribosomal subunit. Forms a cluster with proteins L14 and L19.

Its function is as follows. One of the primary rRNA binding proteins, it binds directly near the 3'-end of the 23S rRNA, where it nucleates assembly of the 50S subunit. This is Large ribosomal subunit protein uL3 from Koribacter versatilis (strain Ellin345).